A 247-amino-acid chain; its full sequence is Putative methyltransferase YqeM (247 aa).

The protein belongs to the methyltransferase superfamily.

May be a S-adenosyl-L-methionine (SAM)-dependent methyltransferase. In Bacillus subtilis (strain 168), this protein is Putative methyltransferase YqeM (yqeM).